We begin with the raw amino-acid sequence, 190 residues long: Acireductone dioxygenase (190 aa).

Residues His-101, His-103, Glu-107, and His-145 each coordinate Fe(2+). Ni(2+) is bound by residues His-101, His-103, Glu-107, and His-145.

The protein belongs to the acireductone dioxygenase (ARD) family. As to quaternary structure, monomer. It depends on Fe(2+) as a cofactor. Ni(2+) is required as a cofactor.

The catalysed reaction is 1,2-dihydroxy-5-(methylsulfanyl)pent-1-en-3-one + O2 = 3-(methylsulfanyl)propanoate + CO + formate + 2 H(+). It catalyses the reaction 1,2-dihydroxy-5-(methylsulfanyl)pent-1-en-3-one + O2 = 4-methylsulfanyl-2-oxobutanoate + formate + 2 H(+). The protein operates within amino-acid biosynthesis; L-methionine biosynthesis via salvage pathway; L-methionine from S-methyl-5-thio-alpha-D-ribose 1-phosphate: step 5/6. Functionally, catalyzes 2 different reactions between oxygen and the acireductone 1,2-dihydroxy-3-keto-5-methylthiopentene (DHK-MTPene) depending upon the metal bound in the active site. Fe-containing acireductone dioxygenase (Fe-ARD) produces formate and 2-keto-4-methylthiobutyrate (KMTB), the alpha-ketoacid precursor of methionine in the methionine recycle pathway. Ni-containing acireductone dioxygenase (Ni-ARD) produces methylthiopropionate, carbon monoxide and formate, and does not lie on the methionine recycle pathway. This chain is Acireductone dioxygenase, found in Saccharopolyspora erythraea (strain ATCC 11635 / DSM 40517 / JCM 4748 / NBRC 13426 / NCIMB 8594 / NRRL 2338).